The chain runs to 317 residues: ADP-L-glycero-D-manno-heptose-6-epimerase (317 aa).

Residues 10–11 (FI), 31–32 (DD), Lys38, Lys53, 75–79 (QGACS), and Asn92 each bind NADP(+). Tyr139 (proton acceptor) is an active-site residue. An NADP(+)-binding site is contributed by Lys143. A substrate-binding site is contributed by Asn166. The NADP(+) site is built by Val167 and Lys175. The active-site Proton acceptor is Lys175. Residues Gly177, His184, 198-201 (FEGV), Arg211, and Tyr275 each bind substrate.

Belongs to the NAD(P)-dependent epimerase/dehydratase family. HldD subfamily. Homopentamer. Requires NADP(+) as cofactor.

It carries out the reaction ADP-D-glycero-beta-D-manno-heptose = ADP-L-glycero-beta-D-manno-heptose. It functions in the pathway nucleotide-sugar biosynthesis; ADP-L-glycero-beta-D-manno-heptose biosynthesis; ADP-L-glycero-beta-D-manno-heptose from D-glycero-beta-D-manno-heptose 7-phosphate: step 4/4. Catalyzes the interconversion between ADP-D-glycero-beta-D-manno-heptose and ADP-L-glycero-beta-D-manno-heptose via an epimerization at carbon 6 of the heptose. The sequence is that of ADP-L-glycero-D-manno-heptose-6-epimerase from Shewanella piezotolerans (strain WP3 / JCM 13877).